We begin with the raw amino-acid sequence, 128 residues long: Large ribosomal subunit protein bL12 (128 aa).

The disordered stretch occupies residues 97–128 (GAPSTLKEGVSKEDAEEAKKQLTEAGATVEVK). The span at 105–118 (GVSKEDAEEAKKQL) shows a compositional bias: basic and acidic residues.

Belongs to the bacterial ribosomal protein bL12 family. As to quaternary structure, homodimer. Part of the ribosomal stalk of the 50S ribosomal subunit. Forms a multimeric L10(L12)X complex, where L10 forms an elongated spine to which 2 to 4 L12 dimers bind in a sequential fashion. Binds GTP-bound translation factors.

Forms part of the ribosomal stalk which helps the ribosome interact with GTP-bound translation factors. Is thus essential for accurate translation. The sequence is that of Large ribosomal subunit protein bL12 from Lawsonia intracellularis (strain PHE/MN1-00).